The primary structure comprises 368 residues: MSAQSVEEDSILIIPTPDEEEKILRVKLEEDPDGEEGSSIPWNHLPDPEIFRQRFRQFGYQDSPGPREAVSQLRELCRLWLRPETHTKEQILELVVLEQFVAILPKELQTWVRDHHPENGEEAVTVLEDLESELDDPGQPVSLRRRKREVLVEDMVSQEEAQGLPSSELDAVENQLKWASWELHSLRHCDDDGRTENGALAPKQELPSAVESHEVPGTLNMGVPQIFKYGETCFPKGRFERKRNPSRKKQHICDECGKHFSQGSALILHQRIHSGEKPYGCVECGKAFSRSSILVQHQRVHTGEKPYKCLECGKAFSQNSGLINHQRIHTGEKPYECVQCGKSYSQSSNLFRHXXRHNAXKLLNVVKV.

Lysine 22 is covalently cross-linked (Glycyl lysine isopeptide (Lys-Gly) (interchain with G-Cter in SUMO2)). Lysine 27 participates in a covalent cross-link: Glycyl lysine isopeptide (Lys-Gly) (interchain with G-Cter in SUMO1); alternate. Lysine 27 participates in a covalent cross-link: Glycyl lysine isopeptide (Lys-Gly) (interchain with G-Cter in SUMO2); alternate. The 83-residue stretch at 52 to 134 folds into the SCAN box domain; it reads RQRFRQFGYQ…TVLEDLESEL (83 aa). 2 positions are modified to phosphoserine: serine 132 and serine 142. Residues lysine 147, lysine 177, and lysine 236 each participate in a glycyl lysine isopeptide (Lys-Gly) (interchain with G-Cter in SUMO2) cross-link. The C2H2-type 1 zinc-finger motif lies at 251–273; the sequence is HICDECGKHFSQGSALILHQRIH. Positions 251–301 are necessary and sufficient for nuclear localization; that stretch reads HICDECGKHFSQGSALILHQRIHSGEKPYGCVECGKAFSRSSILVQHQRVH. A Phosphoserine modification is found at serine 274. Residues lysine 277 and lysine 286 each participate in a glycyl lysine isopeptide (Lys-Gly) (interchain with G-Cter in SUMO2) cross-link. 3 C2H2-type zinc fingers span residues 279–301, 307–329, and 335–357; these read YGCV…QRVH, YKCL…QRIH, and YECV…XXRH. Phosphoserine is present on serine 292. Tyrosine 335 carries the phosphotyrosine modification. Residues lysine 361 and lysine 367 each participate in a glycyl lysine isopeptide (Lys-Gly) (interchain with G-Cter in SUMO2) cross-link.

This sequence belongs to the krueppel C2H2-type zinc-finger protein family. In terms of processing, sumoylated.

The protein resides in the nucleus. Its function is as follows. Transcription factor required for myelination of differentiated oligodendrocytes. Required for the conversion of oligodendrocytes from the premyelinating to the myelinating state. In the developing central nervous system (CNS), involved in the maintenance in the progenitor stage by promoting the cell cycle. Specifically binds to the 5'-TCAT-3' DNA sequence. Has transcription repressor activity in vitro. The chain is Zinc finger protein 24 (ZNF24) from Pan troglodytes (Chimpanzee).